A 304-amino-acid polypeptide reads, in one-letter code: MTRTHDDEWDLASSVGATATMVAAGRAMATKDPRGLIDDPFAEPLVRAVGVDFFTKMMDGELDLDAIENATPVRIQSMVDGMAVRTKYFDDYFVDATDAGVRQVVILASGLDSRAYRLPWPAGTVVYEIDQPRVIEFKSNTLAEVGAEPTATRRTIPIDLRGDWPAALSAAGFDPAAPTAWLAEGLLIYLPPEAQDRLFDNITALSAPGSTIATEFVPGIVDFDAERVREMSGSFREHGVDIDMASLVYAGERNHVIDYLNGLGWRAEGVTRTELFHRHGIEVPAPEHDDPLGEIIFISATRTG.

Residues aspartate 130 and 159-160 contribute to the S-adenosyl-L-methionine site; that span reads DL.

It belongs to the UPF0677 family.

Its function is as follows. Exhibits S-adenosyl-L-methionine-dependent methyltransferase activity. The chain is Putative S-adenosyl-L-methionine-dependent methyltransferase MAV_4444 from Mycobacterium avium (strain 104).